The sequence spans 244 residues: Ribonuclease 3 2 (244 aa).

Positions 11–136 constitute an RNase III domain; the sequence is LKALLRRLGL…LLGALYLSVG (126 aa). Residue glutamate 50 coordinates Mg(2+). Residue aspartate 54 is part of the active site. Mg(2+)-binding residues include aspartate 122 and glutamate 125. Glutamate 125 is a catalytic residue. Residues 164-234 enclose the DRBM domain; the sequence is NYKEALQAWT…AQQAYQDFIA (71 aa).

It belongs to the ribonuclease III family. In terms of assembly, homodimer. It depends on Mg(2+) as a cofactor.

Its subcellular location is the cytoplasm. The catalysed reaction is Endonucleolytic cleavage to 5'-phosphomonoester.. In terms of biological role, digests double-stranded RNA. Involved in the processing of primary rRNA transcript to yield the immediate precursors to the large and small rRNAs (23S and 16S). Processes some mRNAs, and tRNAs when they are encoded in the rRNA operon. Processes pre-crRNA and tracrRNA of type II CRISPR loci if present in the organism. This Synechocystis sp. (strain ATCC 27184 / PCC 6803 / Kazusa) protein is Ribonuclease 3 2.